Reading from the N-terminus, the 65-residue chain is Small ribosomal subunit protein bS21 (65 aa).

It belongs to the bacterial ribosomal protein bS21 family.

This Acidobacterium capsulatum (strain ATCC 51196 / DSM 11244 / BCRC 80197 / JCM 7670 / NBRC 15755 / NCIMB 13165 / 161) protein is Small ribosomal subunit protein bS21.